Reading from the N-terminus, the 197-residue chain is dITP/XTP pyrophosphatase (197 aa).

Residue 10–15 (TKNQGK) coordinates substrate. Asp-70 serves as the catalytic Proton acceptor. A Mg(2+)-binding site is contributed by Asp-70. Substrate contacts are provided by residues Ser-71, 151–154 (FGYD), Lys-173, and 178–179 (HR).

It belongs to the HAM1 NTPase family. Homodimer. It depends on Mg(2+) as a cofactor.

It carries out the reaction XTP + H2O = XMP + diphosphate + H(+). The catalysed reaction is dITP + H2O = dIMP + diphosphate + H(+). The enzyme catalyses ITP + H2O = IMP + diphosphate + H(+). Its function is as follows. Pyrophosphatase that catalyzes the hydrolysis of nucleoside triphosphates to their monophosphate derivatives, with a high preference for the non-canonical purine nucleotides XTP (xanthosine triphosphate), dITP (deoxyinosine triphosphate) and ITP. Seems to function as a house-cleaning enzyme that removes non-canonical purine nucleotides from the nucleotide pool, thus preventing their incorporation into DNA/RNA and avoiding chromosomal lesions. This Symbiobacterium thermophilum (strain DSM 24528 / JCM 14929 / IAM 14863 / T) protein is dITP/XTP pyrophosphatase.